The primary structure comprises 473 residues: Tyrosine phenol-lyase (473 aa).

An N6-(pyridoxal phosphate)lysine modification is found at K257.

Belongs to the beta-eliminating lyase family. In terms of assembly, homotetramer. It depends on pyridoxal 5'-phosphate as a cofactor.

It catalyses the reaction L-tyrosine + H2O = phenol + pyruvate + NH4(+). In Intrasporangium calvum (strain ATCC 23552 / DSM 43043 / JCM 3097 / NBRC 12989 / NCIMB 10167 / NRRL B-3866 / 7 KIP), this protein is Tyrosine phenol-lyase.